The primary structure comprises 266 residues: MRLIPLTSAEQVGKWAARHIVNRINAFKPTADRPFVLGLPTGGTPLTAYKALVEMHKAGQVSFKHVVTFNMDEYVGLPKEHPESYHSFMHRNFFDHVDIPAENINLLNGNAPDIDAECRNYEEKIRSYGKIHLFMGGVGNDGHIAFNEPASSLASRTRIKTLTHDTRVANSRFFDGDVNQVPKYALTVGVGTLLDAEEVMILVLGHQKAQALQAAVEGNVNHMWTISCLQLHPKAVVVCDEPSTMELKVKTLKYFNELEAENIKGL.

Catalysis depends on Asp-72, which acts as the Proton acceptor; for enolization step. Asp-141 serves as the catalytic For ring-opening step. The active-site Proton acceptor; for ring-opening step is His-143. Residue Glu-148 is the For ring-opening step of the active site.

This sequence belongs to the glucosamine/galactosamine-6-phosphate isomerase family. NagB subfamily. In terms of assembly, homohexamer.

It carries out the reaction alpha-D-glucosamine 6-phosphate + H2O = beta-D-fructose 6-phosphate + NH4(+). The protein operates within amino-sugar metabolism; N-acetylneuraminate degradation; D-fructose 6-phosphate from N-acetylneuraminate: step 5/5. Its activity is regulated as follows. Allosterically activated by N-acetylglucosamine 6-phosphate (GlcNAc6P). In terms of biological role, catalyzes the reversible isomerization-deamination of glucosamine 6-phosphate (GlcN6P) to form fructose 6-phosphate (Fru6P) and ammonium ion. The sequence is that of Glucosamine-6-phosphate deaminase from Citrobacter koseri (strain ATCC BAA-895 / CDC 4225-83 / SGSC4696).